Here is a 167-residue protein sequence, read N- to C-terminus: Claudin domain-containing protein 2 (167 aa).

Helical transmembrane passes span 7–27, 59–79, 96–116, and 134–154; these read LQSGGILLSLVANVLMVLSTA, LAVTVACMVLAVGVGVVGMVM, TSAFLFLGGLLLLTALIGYTV, and WLALPFSILAGFCFLLADMIM.

Belongs to the PMP-22/EMP/MP20 family.

The protein resides in the membrane. This is Claudin domain-containing protein 2 (CLDND2) from Homo sapiens (Human).